A 344-amino-acid chain; its full sequence is 1-acyl-sn-glycerol-3-phosphate acyltransferase BAT2, chloroplastic (344 aa).

The transit peptide at 1-49 (MDVASAPGVSSHPPYYSKPICSSQSSLIRIPINKGCCFARSSNLITSLH) directs the protein to the chloroplast. A helical transmembrane segment spans residues 113–133 (GICFCLVAGVSAIVLIVLMIT). Residues 188–193 (HQSFLD) carry the HXXXXD motif motif. A helical transmembrane segment spans residues 210–230 (TGIFVIPVIGWAMSMMGVVPL).

The protein belongs to the 1-acyl-sn-glycerol-3-phosphate acyltransferase family. Widely expressed.

It is found in the plastid. Its subcellular location is the chloroplast membrane. It carries out the reaction a fatty acyl-[ACP] + a 1-acyl-sn-glycero-3-phosphate = a 1,2-diacyl-sn-glycero-3-phosphate + holo-[ACP]. It catalyses the reaction a 1-acyl-sn-glycero-3-phosphate + an acyl-CoA = a 1,2-diacyl-sn-glycero-3-phosphate + CoA. It participates in phospholipid metabolism; CDP-diacylglycerol biosynthesis; CDP-diacylglycerol from sn-glycerol 3-phosphate: step 2/3. Its function is as follows. Plastidial enzyme of the prokaryotic glycerol-3-phosphate pathway that converts lysophosphatidic acid (LPA) into phosphatidic acid by incorporating an acyl moiety at position sn-2. Utilizes palmitoyl-ACP (16:0-ACP) to produce phosphatidic acid containing a saturated group at position sn-2, which is characteristic of lipids synthesized by the prokaryotic pathway. In vitro, can use 16:0-CoA as acyl donor. The chain is 1-acyl-sn-glycerol-3-phosphate acyltransferase BAT2, chloroplastic from Brassica napus (Rape).